A 616-amino-acid polypeptide reads, in one-letter code: Protein LNK1 (616 aa).

Disordered stretches follow at residues 72–112, 361–398, 410–434, and 567–616; these read GKNP…HGFN, ESKS…GPTV, ANLL…KTDS, and SSLS…SDNN. Over residues 371 to 395 the composition is skewed to polar residues; sequence KPSPSSASNESYTSNHAQSIESLQG. Positions 567–577 are enriched in low complexity; sequence SSLSSDNNVLS. Over residues 594 to 608 the composition is skewed to basic and acidic residues; sequence RIEKQEETTELRPEA.

Interacts with CCA1, LHY, REV4 and REV8, but not with PRR7 or PRR9. In terms of tissue distribution, expressed in roots, stems, leaves, seedlings, cotyledons, inflorescences and siliques. Highest expression in root tips, young leaves and vasculatur tissues.

The protein localises to the nucleus. Its function is as follows. Transcriptional coactivator necessary for expression of the clock genes PRR5 and TOC1. Antagonizes REV8 function in the regulation of anthocyanin accumulation. Involved in red light input to the clock. Activates clock-controlled genes with afternoon peak. Mediates light inhibition of hypocotyl elongation. This is Protein LNK1 from Arabidopsis thaliana (Mouse-ear cress).